Consider the following 341-residue polypeptide: Small ribosomal subunit protein uS3 (341 aa).

In terms of domain architecture, KH type-2 spans 38–106 (IRRMMTRGME…QVQLNILEVK (69 aa)). 2 disordered regions span residues 224 to 246 (RAVR…LETA) and 274 to 341 (PAGQ…TKEG). Composition is skewed to low complexity over residues 285–303 (AEQP…VTGE) and 311–333 (AAPA…DAPS).

The protein belongs to the universal ribosomal protein uS3 family. In terms of assembly, part of the 30S ribosomal subunit. Forms a tight complex with proteins S10 and S14.

Its function is as follows. Binds the lower part of the 30S subunit head. Binds mRNA in the 70S ribosome, positioning it for translation. This Acidothermus cellulolyticus (strain ATCC 43068 / DSM 8971 / 11B) protein is Small ribosomal subunit protein uS3.